The primary structure comprises 61 residues: Photosystem II reaction center X protein (61 aa).

Residues isoleucine 26–phenylalanine 46 form a helical membrane-spanning segment.

Belongs to the PsbX family. Type 2 subfamily. In terms of assembly, PSII consists of a core antenna complex that captures photons, and an electron transfer chain that converts photonic excitation into a charge separation. PSII forms dimeric complexes.

It is found in the cellular thylakoid membrane. Involved in the binding and/or turnover of quinones at the Q(B) site of Photosystem II. This is Photosystem II reaction center X protein from Prochlorococcus marinus (strain MIT 9312).